The primary structure comprises 523 residues: Frizzled-2 (523 aa).

One can recognise an FZ domain in the interval 1–120 (PDHGFCQPIS…HGAEQICVGQ (120 aa)). Over 1–205 (PDHGFCQPIS…EDEIRFARVW (205 aa)) the chain is Extracellular. Disulfide bonds link Cys6-Cys67, Cys14-Cys60, Cys51-Cys88, Cys77-Cys117, and Cys81-Cys105. Asn20 carries an N-linked (GlcNAc...) asparagine glycan. The N-linked (GlcNAc...) asparagine glycan is linked to Asn121. The chain crosses the membrane as a helical span at residues 206 to 226 (ILVWSVLCCASTFFTVTTYLV). Residues 227-237 (DMQRFRYPERP) are Cytoplasmic-facing. Residues 238–258 (IIFLSGCYTMVSVAYIAGFVL) traverse the membrane as a helical segment. The Extracellular portion of the chain corresponds to 259–285 (EERVVCNERFQEDGYRTVVQGTKKEGC). The chain crosses the membrane as a helical span at residues 286 to 306 (TILFMMLYFFSMASSIWWVIL). Residues 307 to 328 (SLTWFLAAGMKWGHEAIEANSQ) lie on the Cytoplasmic side of the membrane. A helical transmembrane segment spans residues 329 to 349 (YFHLAAWAVPAVKTITILAMG). Residues 350-372 (QIDGDLLSGVCFVGLNGIDPLRG) are Extracellular-facing. The helical transmembrane segment at 373–393 (FVLAPLFVYLFIGTSFLLAGF) threads the bilayer. Over 394-419 (VSLFRIRTIMKHGGTKTEKLERLMVR) the chain is Cytoplasmic. Residues 420-440 (IGVFSVLYTVPATIVIACYFY) traverse the membrane as a helical segment. Over 441–477 (EQAFRQHWERSWISQHCKSLAIPCPLHFTPRMTPDFT) the chain is Extracellular. The chain crosses the membrane as a helical span at residues 478–498 (VYMIKYLMTLIVGITSGFWIF). The Cytoplasmic portion of the chain corresponds to 499–523 (SGKTLHSWRKFYTRLTNSRQGETTV). A Lys-Thr-X-X-X-Trp motif, mediates interaction with the PDZ domain of Dvl family members motif is present at residues 501-506 (KTLHSW). A PDZ-binding motif is present at residues 521–523 (TTV).

It belongs to the G-protein coupled receptor Fz/Smo family. As to expression, expressed in the developing head and limbs. Expressed broadly in cranial ectoderm. Also expressed in the developing somites (dermomyotome) and in other cranial placodes, including the olfactory, lens, and otic placodes (rostral rim of the vesicle).

It is found in the membrane. The protein localises to the cell membrane. Its function is as follows. Receptor for Wnt proteins. Most of frizzled receptors are coupled to the beta-catenin canonical signaling pathway, which leads to the activation of disheveled proteins, inhibition of GSK-3 kinase, nuclear accumulation of beta-catenin and activation of Wnt target genes. A second signaling pathway involving PKC and calcium fluxes has been seen for some family members, but it is not yet clear if it represents a distinct pathway or if it can be integrated in the canonical pathway, as PKC seems to be required for Wnt-mediated inactivation of GSK-3 kinase. Both pathways seem to involve interactions with G-proteins. May be involved in transduction and intercellular transmission of polarity information during tissue morphogenesis and/or in differentiated tissues. The protein is Frizzled-2 (FZD2) of Gallus gallus (Chicken).